Here is a 140-residue protein sequence, read N- to C-terminus: Large-conductance mechanosensitive channel (140 aa).

Transmembrane regions (helical) follow at residues 16–36 (VIDLAVGVVIGAAFGKIVTAL) and 84–104 (INTVVQFVIIAFAIFLLVKLI).

The protein belongs to the MscL family. Homopentamer.

It localises to the cell inner membrane. In terms of biological role, channel that opens in response to stretch forces in the membrane lipid bilayer. May participate in the regulation of osmotic pressure changes within the cell. The polypeptide is Large-conductance mechanosensitive channel (Xanthomonas oryzae pv. oryzae (strain MAFF 311018)).